The following is a 3164-amino-acid chain: MAAVTFASAITNAITSKPALTGMVQFGSFPPMPLRSTTVTTVATSVAQPKLYTVQFGSLDPVVVKSGAGSLAKATRQQPNVEIDVSLSEAAALEVAKPRSNAVLRMHEEANKERALFLDWEASLKRSSYGIAEDEKVVMTTHGVSKIVPRSSRAMKLKRARERRRAQQPIILKWEPKLSGISIGGGLSASVIEAEEVRTKWPLHKTPSMKKRTVHRICKMNDQGVDMLTRSLVKIFKTKSANIEYIGKKSIKVDFIRKERTKFARIQVAHLLGKRAQRDLLTGMEENHFIDILSKYSGNKTTINPGVVCAGWSGIVVGNGILTQKRSRSPSEAFVIRGEHEGKLYDARIKVTRTMSHKIVHFSAAGANFWKGFDRCFLAYRSDNREHTCYSGLDVTECGEVAALMCLAMFPCGKITCPDCVTDSELSQGQASGPSMKHRLTQLRDVIKSSYPRFKHAVQILDRYEQSLSSANENYQDFAEIQSISDGVEKAAFPHVNKLNAILIKGATVTGEEFSQATKHLLEIARYLKNRTENIEKGSLKSFRNKISQKAHINPTLMCDNQLDRNGNFIWGERGYHAKRFFSNYFEIIDPKKGYTQYETRAVPNGSRKLAIGKLIVPTNFEVLREQMKGEPVEPYPVTVECVSKLQGDFVHACCCVTTESGDPVLSEIKMPTKHHLVIGNSGDPKYIDLPEIEENKMYIAKEGYCYINIFLAMLVNVKESQAKEFTKVVRDKLVGELGKWPTLLDVATACYFLKVFYPDVANAELPRMLVDHKTKIIHVVDSYGSLSTGYHVLKTNTVEQLIKFTRCNLESSLKHYRVGGTEWEDTHGSSNIDNPQWCIKRLIKGVYKPKQLKEDMLANPFLPLYALLSPGVILAFYNSGSLEYLMNHYIRVDSNVAVLLVVLKSLAKKVSTSQSVLAQLQIIERSLPELIEAKANVNGPDDAATRACNRFMGMLLHMAEPNWELADGGYTILRDHSISILEKSYLQILDEAWNELSWSERCAIRYYSSKQAIFTQKDLPMKSEADLGGRYSVSVMSSYERSKQCMKSVHSSIGNRLRSSMSWTSSKVSNSVCRTINYLVPDVFKFMNVLVCISLLIKMTAEANHIVTTQRRLKLDVEETERRKIEWELAFHHAILTQSAGQHPTIDEFRAYIADKAPHLSEHIEPEEKAVVHQAKRQSEQELERIIAFVALVLMMFDAERSDCVTKILNKLKGLVATVEPTVYHQTLNDIEDDLSERNLFVDFELSSDGDMLQQLPAEKTFASWWSHQLSRGFTIPHYRTEGKFMTFTRATATEVAGKIAHESDKDILLMGAVGSGKSTGLPYHLSRKGNVLLLEPTRPLAENVHKQLSQAPFHQNTTLRMRGLTAFGSAPISVMTSGFALNYFANNRMRIEEFDFVIFDECHVHDANAMAMRCLLHECDYSGKIIKVSATPPGREVEFSTQYPVSISTEDTLSFQDFVNAQGSGSNCDVISKGDNILVYVASYNEVDALSKLLIERDFKVTKVDGRTMKVGNIEITTSGTPSKKHFIVATNIIENGVTLDIDVVADFGTKVLPYLDTDSRMLSTTKTSINYGERIQRLGRVGRHKPGHALRIGHTEKGLSEVPSCIATEAALKCFTYGLPVITNNVSTSILGNVTVKQARTMSVFEITPFYTSQVVRYDGSMHPQVHALLKRFKLRDSEIVLNKLAIPHRGVNAWLTASEYARLGANVEDRRDVRIPFMCRDIPEKLHLDMWDVIVKFKGDAGFGRLSSASASKVAYTLQTDVNSIQRTVTIIDTLIAEERRKQEYFKTVTSNCVSSSNFSLQSITNAIKSRMMKDHTCENISVLEGAKSQLLEFRNLNADHSFATKTDGISRHFMSEYGALEAVHHQNTSDMSKFLKLKGKWNKTLITRDVLVLCGVLGGGLWMVIQHLRSKMSEPVTHEAKGKRQRQKLKFRNARDNKMGREVYGDDDTIEHFFGDAYTKKGKSKGRTRGIGHKNRKFINMYGFDPEDFSAVRFVDPLTGATLDDNPLTDITLVQEHFGNIRMDLLGEDELDSNEIRVNKTIQAYYMNNKTGKALKVDLTPHIPLKVCDLHATIAGFPERENELRQTGKAQPINIDEVPRANNELVPVDHESNSMFRGLRDYNPISNNICHLTNVSDGASNSLYGVGFGPLILTNRHLFERNNGELVIKSRHGEFVIKNTTQLHLLPIPDRDLLLIRLPKDVPPFPQKLGFRQPEKGERICMVGSNFQTKSITSIVSETSTIMPVENSQFWKHWISTKDGQCGSPMVSTKDGKILGLHSLANFQNSINYFAAFPDDFAEKYLHTIEAHEWVKHWKYNTSAISWGSLNIQASQPSGLFKVSKLISDLDSTAVYAQTQQNRWMFEQLNGNLKAIAHCPSQLVTKHTVKGKCQMFDLYLKLHDEAREYFQPMLGQYQKSKLNREAYAKDLLKYATPIEAGNIDCDLFEKTVEIVVSDLRGYGFETCNYVTDENDIFEALNMKSAVGALYKGKKKDYFAEFTPEMKEEILKQSCERLFLGKMGVWNGSLKAELRPLEKVEANKTRTFTAAPLDTLLGGKVCVDDFNNQFYDHNLRAPWSVGMTKFYCGWDRLLESLPDGWVYCDADGSQFDSSLSPYLINAVLNIRLGFMEEWDIGEVMLRNLYTEIVYTPISTPDGTLVKKFKGNNSGQPSTVVDNTLMVILAVNYSLKKSGIPSELRDSIIRFFVNGDDLLLSVHPEYEYILDTMADNFRELGLKYTFDSRTREKGDLWFMSHQGHKREGIWIPKLEPERIVSILEWDRSKEPCHRLEAICAAMIESWGYDKLTHEIRKFYAWMIEQAPFSSLAQEGKAPYIAETALRKLYLDKEPAQEDLTHYLQAIFEDYEDGAEACVYHQAGETLDAGLTDEQKQAEKEKKEREKAEKERERQKQLALKKGKDVAQEEGKRDKEVNAGTSGTFSVPRLKSLTSKMRVPRYEKRVALNLDHLILYTPEQTDLSNTRSTRKQFDTWFEGVMADYELTEDKMQIILNGLMVWCIENGTSPNINGMWVMMDGDDQVEFPIKPLIDHAKPTFRQIMAHFSDVAEAYIEKRNQDRPYMPRYGLQRNLTDMSLARYAFDFYEMTSRTPIRAREAHIQMKAAALRGANNNLFGLDGNVGTTVENTERHTTEDVNRNMHNLLGVQGL.

One can recognise a Peptidase S30 domain in the interval K219–F362. Residues H270, D279, and S313 each act as for P1 proteinase activity in the active site. The Involved in interaction with stylet and aphid transmission motif lies at K414–C417. An Involved in virions binding and aphid transmission motif is present at residues P672–K674. The region spanning M698–G820 is the Peptidase C6 domain. Catalysis depends on for helper component proteinase activity residues C706 and H779. Positions K1300–E1452 constitute a Helicase ATP-binding domain. G1313–S1320 is an ATP binding site. Residues D1402–H1405 carry the DEAH box motif. Residues D1471–S1630 enclose the Helicase C-terminal domain. Topologically, residues N1872–T1889 are cytoplasmic. The helical transmembrane segment at L1890–I1910 threads the bilayer. At Q1911–E1924 the chain is on the lumenal side. The Nuclear localization signal motif lies at K1965 to R1972. Y1987 is modified (O-(5'-phospho-RNA)-tyrosine). Positions S2117 to A2335 constitute a Peptidase C4 domain. Active-site for nuclear inclusion protein A activity residues include H2162, D2197, and C2267. One can recognise a RdRp catalytic domain in the interval W2601–L2725. The segment at G2884–T2935 is disordered. A compositionally biased stretch (basic and acidic residues) spans D2887 to V2931. T3147 carries the phosphothreonine modification.

It belongs to the potyviridae genome polyprotein family. Interacts with host eIF4E protein (via cap-binding region); this interaction mediates the translation of the VPg-viral RNA conjugates. Part of a complex that comprises VPg, RNA, host EIF4E and EIF4G; this interaction mediates the translation of the VPg-viral RNA conjugates. As to quaternary structure, interacts, via N-terminal region, with host Sec24a protein in COPII-coated vesicles. This binding triggers the formation of host endoplasmic reticulum (ER)-derived viral vesicles involved in cell-to-cell viral movement. In terms of processing, VPg is uridylylated by the polymerase and is covalently attached to the 5'-end of the genomic RNA. This uridylylated form acts as a nucleotide-peptide primer for the polymerase. Potyviral RNA is expressed as two polyproteins which undergo post-translational proteolytic processing. Genome polyprotein is processed by NIa-pro, P1 and HC-pro proteinases resulting in the production of at least ten individual proteins. P3N-PIPO polyprotein is cleaved by P1 and HC-pro proteinases resulting in the production of three individual proteins. The P1 proteinase and the HC-pro cleave only their respective C-termini autocatalytically. 6K1 is essential for proper proteolytic separation of P3 from CI.

It is found in the host cytoplasm. The protein resides in the host nucleus. The protein localises to the host cytoplasmic vesicle. It localises to the host membrane. Its subcellular location is the virion. It carries out the reaction RNA(n) + a ribonucleoside 5'-triphosphate = RNA(n+1) + diphosphate. The catalysed reaction is Hydrolyzes glutaminyl bonds, and activity is further restricted by preferences for the amino acids in P6 - P1' that vary with the species of potyvirus, e.g. Glu-Xaa-Xaa-Tyr-Xaa-Gln-|-(Ser or Gly) for the enzyme from tobacco etch virus. The natural substrate is the viral polyprotein, but other proteins and oligopeptides containing the appropriate consensus sequence are also cleaved.. It catalyses the reaction Hydrolyzes a Gly-|-Gly bond at its own C-terminus, commonly in the sequence -Tyr-Xaa-Val-Gly-|-Gly, in the processing of the potyviral polyprotein.. In terms of biological role, cysteine protease that cleaves a Gly-Gly dipeptide at its own C-terminus. Required for aphid transmission and also has proteolytic activity. Interacts with virions and aphid stylets. Acts as a suppressor of RNA-mediated gene silencing, also known as post-transcriptional gene silencing (PTGS), a mechanism of plant viral defense that limits the accumulation of viral RNAs. May have RNA-binding activity. Has helicase activity. It may be involved in replication. Functionally, indispensable for virus replication. Reduces the abundance of host transcripts related to jasmonic acid biosynthesis therefore altering the host defenses. In order to increase its own stability, decreases host protein degradation pathways. Its function is as follows. Responsible for the formation of peripheral motile host endoplasmic reticulum (ER)-derived viral vesicles called 'viral factories', seat of the viral RNA (vRNA) replication and carrying vRNA to plasmodesmata for delivery into adjacent non-infected cells; this process relies on host Sec24a-binding. In terms of biological role, mediates the cap-independent, EIF4E-dependent translation of viral genomic RNAs. Binds to the cap-binding site of host EIF4E and thus interferes with the host EIF4E-dependent mRNA export and translation. VPg-RNA directly binds EIF4E and is a template for transcription. Also forms trimeric complexes with EIF4E-EIF4G, which are templates for translation. Has RNA-binding and proteolytic activities. Functionally, RNA-dependent RNA polymerase that ensures transcription and replication of viral RNA (vRNA). Its function is as follows. Involved in aphid transmission, cell-to-cell and systemis movement, encapsidation of the viral RNA and in the regulation of viral RNA amplification. The sequence is that of Genome polyprotein from Turnip mosaic virus (strain Japanese) (TuMV).